A 78-amino-acid polypeptide reads, in one-letter code: Defensin-like protein 90 (78 aa).

The N-terminal stretch at 1 to 25 (MTTKMFSYVLLHSLMMFAIILSSMG) is a signal peptide. 4 cysteine pairs are disulfide-bonded: Cys33-Cys70, Cys38-Cys59, Cys44-Cys68, and Cys48-Cys69.

Belongs to the DEFL family.

It localises to the secreted. This chain is Defensin-like protein 90, found in Arabidopsis thaliana (Mouse-ear cress).